The sequence spans 405 residues: Cystathionine gamma-lyase (405 aa).

Residues R62, Y114, and R119 each coordinate substrate. K212 bears the N6-(pyridoxal phosphate)lysine mark. E339 serves as a coordination point for substrate.

This sequence belongs to the trans-sulfuration enzymes family. As to quaternary structure, homotetramer. Interacts with CALM in a calcium-dependent manner. Pyridoxal 5'-phosphate serves as cofactor.

It is found in the cytoplasm. The enzyme catalyses L,L-cystathionine + H2O = 2-oxobutanoate + L-cysteine + NH4(+). The catalysed reaction is L-cysteine + H2O = hydrogen sulfide + pyruvate + NH4(+) + H(+). It catalyses the reaction L-homocysteine + H2O = 2-oxobutanoate + hydrogen sulfide + NH4(+) + H(+). It carries out the reaction L-homoserine = 2-oxobutanoate + NH4(+). The enzyme catalyses L-selenocystathionine + H2O = L-selenocysteine + 2-oxobutanoate + NH4(+). The protein operates within amino-acid biosynthesis; L-cysteine biosynthesis; L-cysteine from L-homocysteine and L-serine: step 2/2. Catalyzes the last step in the trans-sulfuration pathway from L-methionine to L-cysteine in a pyridoxal-5'-phosphate (PLP)-dependent manner, which consists on cleaving the L,L-cystathionine molecule into L-cysteine, ammonia and 2-oxobutanoate. Part of the L-cysteine derived from the trans-sulfuration pathway is utilized for biosynthesis of the ubiquitous antioxidant glutathione. Besides its role in the conversion of L-cystathionine into L-cysteine, it utilizes L-cysteine and L-homocysteine as substrates (at much lower rates than L,L-cystathionine) to produce hydrogen sulfide (H2S). In vitro, it converts two L-cysteine molecules into lanthionine and H2S, and two L-homocysteine molecules to homolanthionine and H2S, which can be particularly relevant under conditions of severe hyperhomocysteinemia. Lanthionine and homolanthionine are structural homologs of L,L-cystathionine that differ by the absence or presence of an extra methylene group, respectively. Acts as a cysteine-protein sulfhydrase by mediating sulfhydration of target proteins: sulfhydration consists of converting -SH groups into -SSH on specific cysteine residues of target proteins such as GAPDH, PTPN1 and NF-kappa-B subunit RELA, thereby regulating their function. By generating the gasotransmitter H2S, it participates in a number of physiological processes such as vasodilation, bone protection, and inflammation. Plays an essential role in myogenesis by contributing to the biogenesis of H2S in skeletal muscle tissue. Can also accept homoserine as substrate. Catalyzes the elimination of selenocystathionine (which can be derived from the diet) to yield selenocysteine, ammonia and 2-oxobutanoate. This Sus scrofa (Pig) protein is Cystathionine gamma-lyase (CTH).